We begin with the raw amino-acid sequence, 374 residues long: DNA integrity scanning protein DisA (374 aa).

One can recognise a DAC domain in the interval 20 to 158 (EALMRASLSA…DGERRVLEES (139 aa)). Residues Gly87, Leu105, and 118–122 (TRHRT) each bind ATP.

It belongs to the DisA family. Homooctamer. Mg(2+) is required as a cofactor.

The enzyme catalyses 2 ATP = 3',3'-c-di-AMP + 2 diphosphate. Its function is as follows. Participates in a DNA-damage check-point that is active prior to asymmetric division when DNA is damaged. DisA forms globular foci that rapidly scan along the chromosomes during sporulation, searching for lesions. When a lesion is present, DisA pauses at the lesion site. This triggers a cellular response that culminates in a temporary block in sporulation initiation. Functionally, also has diadenylate cyclase activity, catalyzing the condensation of 2 ATP molecules into cyclic di-AMP (c-di-AMP). c-di-AMP acts as a signaling molecule that couples DNA integrity with progression of sporulation. The rise in c-di-AMP level generated by DisA while scanning the chromosome, operates as a positive signal that advances sporulation; upon encountering a lesion, the DisA focus arrests at the damaged site and halts c-di-AMP synthesis. This is DNA integrity scanning protein DisA from Streptomyces griseus subsp. griseus (strain JCM 4626 / CBS 651.72 / NBRC 13350 / KCC S-0626 / ISP 5235).